The sequence spans 349 residues: Green-sensitive opsin-2 (349 aa).

Residues Met-1–Gln-36 lie on the Extracellular side of the membrane. N-linked (GlcNAc...) asparagine glycans are attached at residues Asn-2 and Asn-15. Residues Phe-37 to Val-61 form a helical membrane-spanning segment. Residues Thr-62–Asn-73 are Cytoplasmic-facing. The helical transmembrane segment at Tyr-74–Ile-99 threads the bilayer. The Extracellular portion of the chain corresponds to Asn-100–Glu-113. The cysteines at positions 110 and 187 are disulfide-linked. A helical membrane pass occupies residues Gly-114–Ile-133. Over Glu-134 to His-152 the chain is Cytoplasmic. A helical transmembrane segment spans residues Ala-153–Ser-176. Residues Arg-177–Ser-202 are Extracellular-facing. Residue Asn-200 is glycosylated (N-linked (GlcNAc...) asparagine). Residues Tyr-203 to Val-230 traverse the membrane as a helical segment. At Lys-231 to Arg-252 the chain is on the cytoplasmic side. Residues Met-253–Phe-276 traverse the membrane as a helical segment. Topologically, residues Phe-277 to Ser-284 are extracellular. A helical membrane pass occupies residues Ala-285 to Leu-309. Lys-296 is modified (N6-(retinylidene)lysine). The Cytoplasmic portion of the chain corresponds to Asn-310–Ala-349. A disordered region spans residues Leu-328–Ala-349. Over residues Ser-334–Ala-349 the composition is skewed to low complexity.

Belongs to the G-protein coupled receptor 1 family. Opsin subfamily. Phosphorylated on some or all of the serine and threonine residues present in the C-terminal region.

It localises to the membrane. Visual pigments are the light-absorbing molecules that mediate vision. They consist of an apoprotein, opsin, covalently linked to cis-retinal. The chain is Green-sensitive opsin-2 (opn1mw2) from Danio rerio (Zebrafish).